Consider the following 166-residue polypeptide: Urease accessory protein UreE 2 (166 aa).

The segment at 133–156 is disordered; it reads QPEHGAYGGGHHHSRAGEEDFNYP.

Belongs to the UreE family.

The protein localises to the cytoplasm. In terms of biological role, involved in urease metallocenter assembly. Binds nickel. Probably functions as a nickel donor during metallocenter assembly. The protein is Urease accessory protein UreE 2 of Pseudomonas syringae pv. tomato (strain ATCC BAA-871 / DC3000).